Consider the following 407-residue polypeptide: GTPase Obg (407 aa).

In terms of domain architecture, Obg spans 1 to 159 (MKFVDEVSIR…RDLKLELKVL (159 aa)). Positions 127-149 (NTRFKSSTNRAPRQTTPGKPGDQ) are disordered. The span at 129 to 143 (RFKSSTNRAPRQTTP) shows a compositional bias: polar residues. Residues 160 to 333 (ADVGLLGLPN…LTRDIMRYLE (174 aa)) enclose the OBG-type G domain. Residues 166–173 (GLPNAGKS), 191–195 (FTTLV), 213–216 (DIPG), 283–286 (NKCD), and 314–316 (SAI) each bind GTP. Mg(2+) is bound by residues Ser-173 and Thr-193. Residues 376–407 (SGVKSVHDIGDDDWDEEDVDDEDGPEIIYVRD) are disordered. Over residues 385–400 (GDDDWDEEDVDDEDGP) the composition is skewed to acidic residues.

Belongs to the TRAFAC class OBG-HflX-like GTPase superfamily. OBG GTPase family. In terms of assembly, monomer. Mg(2+) is required as a cofactor.

The protein localises to the cytoplasm. In terms of biological role, an essential GTPase which binds GTP, GDP and possibly (p)ppGpp with moderate affinity, with high nucleotide exchange rates and a fairly low GTP hydrolysis rate. Plays a role in control of the cell cycle, stress response, ribosome biogenesis and in those bacteria that undergo differentiation, in morphogenesis control. This is GTPase Obg from Pseudomonas savastanoi pv. phaseolicola (strain 1448A / Race 6) (Pseudomonas syringae pv. phaseolicola (strain 1448A / Race 6)).